The primary structure comprises 409 residues: Astacin-like metalloendopeptidase (409 aa).

The N-terminal stretch at 1-19 is a signal peptide; it reads MDLKMLLIFIAFLLPSVLG. The segment covering 30 to 39 has biased composition (low complexity); it reads TATTESTQVT. Residues 30–54 form a disordered region; sequence TATTESTQVTTEEDIYDSPSPAETD. In terms of domain architecture, Peptidase M12A spans 87 to 285; sequence SAINCRNCYW…AKINRLYNCS (199 aa). 5 cysteine pairs are disulfide-bonded: Cys-91–Cys-94, Cys-134–Cys-284, Cys-155–Cys-175, Cys-287–Cys-313, and Cys-339–Cys-362. His-183 is a binding site for Zn(2+). Residue Glu-184 is part of the active site. Positions 187 and 193 each coordinate Zn(2+). Residues 287-399 enclose the CUB domain; that stretch reads CSTIIDAAFG…SGFQATFTSA (113 aa).

It depends on Zn(2+) as a cofactor. In terms of tissue distribution, expressed in ovary and gonads.

It is found in the cytoplasm. The protein resides in the cell membrane. Its subcellular location is the cytoplasmic vesicle. The protein localises to the secretory vesicle. It localises to the cortical granule. Functionally, probable oocyte-specific oolemmal receptor involved in sperm and egg adhesion and fertilization. May act as a protease. This chain is Astacin-like metalloendopeptidase (ASTL), found in Gallus gallus (Chicken).